A 228-amino-acid polypeptide reads, in one-letter code: Leucokinins (228 aa).

The signal sequence occupies residues Met1–Gly18. Residues Trp19–Gln164 constitute a propeptide that is removed on maturation. The disordered stretch occupies residues Glu80 to Asn118. 2 positions are modified to glycine amide: Gly180 and Gly193. The propeptide occupies Asn197 to Ile209. Residue Gly217 is modified to Glycine amide. Positions Asn221–Phe228 are excised as a propeptide.

The protein localises to the secreted. Functionally, stimulates both fluid secretion by the Malpighian tubules and hindgut contractions. Depolarize the transepithelial voltage of the Malpighian tubules in concentrations of less than 10(-9) M and increase the frequency of hindgut contractions at concentrations above 10(-8) M. This Aedes aegypti (Yellowfever mosquito) protein is Leucokinins.